A 327-amino-acid chain; its full sequence is Thioredoxin reductase (327 aa).

Residues 10–13, 39–40, Gln44, Asn53, Val86, Cys143, Asp286, and 293–295 contribute to the FAD site; these read SGPA, IA, and RQA. Cys140 and Cys143 are joined by a disulfide.

It belongs to the class-II pyridine nucleotide-disulfide oxidoreductase family. In terms of assembly, homodimer. The cofactor is FAD.

It is found in the cytoplasm. It carries out the reaction [thioredoxin]-dithiol + NADP(+) = [thioredoxin]-disulfide + NADPH + H(+). Component of the thioredoxin-thioredoxin reductase system which may be involved in biosynthesis of penicillins and cephalosporins and may be important in determining the thiol-disulfide redox balance. This is Thioredoxin reductase (TRR1) from Pneumocystis jirovecii (Human pneumocystis pneumonia agent).